A 272-amino-acid chain; its full sequence is 3-methyl-2-oxobutanoate hydroxymethyltransferase (272 aa).

Asp-42 and Asp-86 together coordinate Mg(2+). 3-methyl-2-oxobutanoate is bound by residues Asp-42 to Ser-43, Asp-86, and Lys-116. Glu-118 serves as a coordination point for Mg(2+). Glu-185 acts as the Proton acceptor in catalysis. Residues Leu-251–Cys-272 are disordered. A compositionally biased stretch (pro residues) spans Thr-262–Cys-272.

Belongs to the PanB family. As to quaternary structure, homodecamer; pentamer of dimers. Requires Mg(2+) as cofactor.

The protein resides in the cytoplasm. The catalysed reaction is 3-methyl-2-oxobutanoate + (6R)-5,10-methylene-5,6,7,8-tetrahydrofolate + H2O = 2-dehydropantoate + (6S)-5,6,7,8-tetrahydrofolate. Its pathway is cofactor biosynthesis; (R)-pantothenate biosynthesis; (R)-pantoate from 3-methyl-2-oxobutanoate: step 1/2. Its function is as follows. Catalyzes the reversible reaction in which hydroxymethyl group from 5,10-methylenetetrahydrofolate is transferred onto alpha-ketoisovalerate to form ketopantoate. This Synechococcus sp. (strain CC9311) protein is 3-methyl-2-oxobutanoate hydroxymethyltransferase.